A 99-amino-acid polypeptide reads, in one-letter code: Large ribosomal subunit protein bL21 (99 aa).

This sequence belongs to the bacterial ribosomal protein bL21 family. In terms of assembly, part of the 50S ribosomal subunit. Contacts protein L20.

Its function is as follows. This protein binds to 23S rRNA in the presence of protein L20. In Mesomycoplasma hyopneumoniae (strain 7448) (Mycoplasma hyopneumoniae), this protein is Large ribosomal subunit protein bL21.